A 231-amino-acid chain; its full sequence is Transcriptional regulatory protein KdpE (231 aa).

In terms of domain architecture, Response regulatory spans 4-117 (KILIIEDDHA…ELRARIRVIE (114 aa)). D53 carries the post-translational modification 4-aspartylphosphate. The segment at residues 127 to 227 (NIVFTNGLLS…HPRIGYQMLQ (101 aa)) is a DNA-binding region (ompR/PhoB-type).

Phosphorylated by KdpD. Phosphorylation is required for transcriptional activity.

Functionally, member of the two-component regulatory system KdpD/KdpE that regulates the transcription of a series of virulence factors through sensing external K(+) concentrations. Also regulates capsular polysaccharide synthesis. Upon phosphorylation by KpdD, functions as a transcriptional regulator by direct binding to promoter regions of target genes including spa, hla, aur and geh. Represses the transcription of kdpFABC operon. This Staphylococcus aureus (strain NCTC 8325 / PS 47) protein is Transcriptional regulatory protein KdpE.